The following is a 343-amino-acid chain: SET and MYND domain-containing protein DDB_G0292454 (343 aa).

Residues 77-307 (EPFISYPSII…PGDEITISYT (231 aa)) form the SET domain. 8 residues coordinate Zn(2+): C93, C96, C111, C114, C120, C124, H133, and C137. An MYND-type zinc finger spans residues 93-137 (CNHCLKEIKKEEEEIKQECEECKVYKYCSIECKEKSSIEYHSVLC).

The protein belongs to the class V-like SAM-binding methyltransferase superfamily.

Probable methyltransferase. The polypeptide is SET and MYND domain-containing protein DDB_G0292454 (Dictyostelium discoideum (Social amoeba)).